The chain runs to 492 residues: Aspartyl/glutamyl-tRNA(Asn/Gln) amidotransferase subunit B (492 aa).

It belongs to the GatB/GatE family. GatB subfamily. Heterotrimer of A, B and C subunits.

The enzyme catalyses L-glutamyl-tRNA(Gln) + L-glutamine + ATP + H2O = L-glutaminyl-tRNA(Gln) + L-glutamate + ADP + phosphate + H(+). It carries out the reaction L-aspartyl-tRNA(Asn) + L-glutamine + ATP + H2O = L-asparaginyl-tRNA(Asn) + L-glutamate + ADP + phosphate + 2 H(+). Its function is as follows. Allows the formation of correctly charged Asn-tRNA(Asn) or Gln-tRNA(Gln) through the transamidation of misacylated Asp-tRNA(Asn) or Glu-tRNA(Gln) in organisms which lack either or both of asparaginyl-tRNA or glutaminyl-tRNA synthetases. The reaction takes place in the presence of glutamine and ATP through an activated phospho-Asp-tRNA(Asn) or phospho-Glu-tRNA(Gln). In Pelagibacter ubique (strain HTCC1062), this protein is Aspartyl/glutamyl-tRNA(Asn/Gln) amidotransferase subunit B.